The following is a 152-amino-acid chain: D-aminoacyl-tRNA deacylase (152 aa).

Residues 142 to 143 carry the Gly-cisPro motif, important for rejection of L-amino acids motif; it reads GP.

It belongs to the DTD family. Homodimer.

The protein localises to the cytoplasm. The catalysed reaction is glycyl-tRNA(Ala) + H2O = tRNA(Ala) + glycine + H(+). It carries out the reaction a D-aminoacyl-tRNA + H2O = a tRNA + a D-alpha-amino acid + H(+). An aminoacyl-tRNA editing enzyme that deacylates mischarged D-aminoacyl-tRNAs. Also deacylates mischarged glycyl-tRNA(Ala), protecting cells against glycine mischarging by AlaRS. Acts via tRNA-based rather than protein-based catalysis; rejects L-amino acids rather than detecting D-amino acids in the active site. By recycling D-aminoacyl-tRNA to D-amino acids and free tRNA molecules, this enzyme counteracts the toxicity associated with the formation of D-aminoacyl-tRNA entities in vivo and helps enforce protein L-homochirality. In Burkholderia vietnamiensis (strain G4 / LMG 22486) (Burkholderia cepacia (strain R1808)), this protein is D-aminoacyl-tRNA deacylase.